The chain runs to 206 residues: Ribosomal RNA large subunit methyltransferase E (206 aa).

S-adenosyl-L-methionine-binding residues include G63, W65, D83, D99, and D124. K164 functions as the Proton acceptor in the catalytic mechanism.

This sequence belongs to the class I-like SAM-binding methyltransferase superfamily. RNA methyltransferase RlmE family.

It is found in the cytoplasm. It carries out the reaction uridine(2552) in 23S rRNA + S-adenosyl-L-methionine = 2'-O-methyluridine(2552) in 23S rRNA + S-adenosyl-L-homocysteine + H(+). Specifically methylates the uridine in position 2552 of 23S rRNA at the 2'-O position of the ribose in the fully assembled 50S ribosomal subunit. The sequence is that of Ribosomal RNA large subunit methyltransferase E from Buchnera aphidicola subsp. Schizaphis graminum (strain Sg).